The primary structure comprises 132 residues: Small ribosomal subunit protein uS8c (132 aa).

This sequence belongs to the universal ribosomal protein uS8 family. Part of the 30S ribosomal subunit.

It localises to the plastid. Its subcellular location is the cyanelle. One of the primary rRNA binding proteins, it binds directly to 16S rRNA central domain where it helps coordinate assembly of the platform of the 30S subunit. The sequence is that of Small ribosomal subunit protein uS8c (rps8) from Cyanophora paradoxa.